The chain runs to 749 residues: G-type lectin S-receptor-like serine/threonine-protein kinase At1g61460 (749 aa).

Residues 1–25 (MRITFFASLLLFTNTIFISFSFAIA) form the signal peptide. A Bulb-type lectin domain is found at 26–145 (GINKESPLSI…FSGRTLWQSF (120 aa)). At 26–392 (GINKESPLSI…ELGGNKRKKT (367 aa)) the chain is on the extracellular side. 4 N-linked (GlcNAc...) asparagine glycosylation sites follow: Asn54, Asn95, Asn118, and Asn135. Positions 247 to 280 (PAHSCDYYGVCGPFGICVKSVCKCFKGFIPKYIE) constitute an EGF-like; atypical domain. 2 disulfide bridges follow: Cys251–Cys263 and Cys257–Cys268. Asn286, Asn302, and Asn341 each carry an N-linked (GlcNAc...) asparagine glycan. A PAN domain is found at 299–381 (CQENSTKKDA…GEILSIRLAR (83 aa)). 2 disulfide bridges follow: Cys334–Cys355 and Cys338–Cys344. Residues 393–413 (ITASIVSLSLFLILGSTAFGF) form a helical membrane-spanning segment. The Cytoplasmic portion of the chain corresponds to 414-749 (WRYRVKHNAS…EMTKSVILGR (336 aa)). One can recognise a Protein kinase domain in the interval 454–721 (FSLSNKLGQG…DLPSPKQPTF (268 aa)). ATP is bound by residues 460-468 (LGQGGFGSV) and Lys482. The caM-binding stretch occupies residues 543–560 (RKRLEIDWPKRFDIIQGI). Asp579 serves as the catalytic Proton acceptor.

It belongs to the protein kinase superfamily. Ser/Thr protein kinase family.

It localises to the cell membrane. It catalyses the reaction L-seryl-[protein] + ATP = O-phospho-L-seryl-[protein] + ADP + H(+). The catalysed reaction is L-threonyl-[protein] + ATP = O-phospho-L-threonyl-[protein] + ADP + H(+). The polypeptide is G-type lectin S-receptor-like serine/threonine-protein kinase At1g61460 (Arabidopsis thaliana (Mouse-ear cress)).